A 184-amino-acid chain; its full sequence is ATP synthase subunit b, chloroplastic (184 aa).

Residues 27–49 (LATNLINLSVVLGVLIFFGKGVL) form a helical membrane-spanning segment.

This sequence belongs to the ATPase B chain family. As to quaternary structure, F-type ATPases have 2 components, F(1) - the catalytic core - and F(0) - the membrane proton channel. F(1) has five subunits: alpha(3), beta(3), gamma(1), delta(1), epsilon(1). F(0) has four main subunits: a(1), b(1), b'(1) and c(10-14). The alpha and beta chains form an alternating ring which encloses part of the gamma chain. F(1) is attached to F(0) by a central stalk formed by the gamma and epsilon chains, while a peripheral stalk is formed by the delta, b and b' chains.

The protein resides in the plastid. It localises to the chloroplast thylakoid membrane. Its function is as follows. F(1)F(0) ATP synthase produces ATP from ADP in the presence of a proton or sodium gradient. F-type ATPases consist of two structural domains, F(1) containing the extramembraneous catalytic core and F(0) containing the membrane proton channel, linked together by a central stalk and a peripheral stalk. During catalysis, ATP synthesis in the catalytic domain of F(1) is coupled via a rotary mechanism of the central stalk subunits to proton translocation. Functionally, component of the F(0) channel, it forms part of the peripheral stalk, linking F(1) to F(0). This is ATP synthase subunit b, chloroplastic from Nymphaea alba (White water-lily).